The sequence spans 310 residues: Ribosomal RNA small subunit methyltransferase H (310 aa).

S-adenosyl-L-methionine is bound by residues 32 to 34 (GGH), Asp52, Phe79, Asp100, and Gln107.

This sequence belongs to the methyltransferase superfamily. RsmH family.

The protein localises to the cytoplasm. The enzyme catalyses cytidine(1402) in 16S rRNA + S-adenosyl-L-methionine = N(4)-methylcytidine(1402) in 16S rRNA + S-adenosyl-L-homocysteine + H(+). Its function is as follows. Specifically methylates the N4 position of cytidine in position 1402 (C1402) of 16S rRNA. This Geobacillus thermodenitrificans (strain NG80-2) protein is Ribosomal RNA small subunit methyltransferase H.